The sequence spans 316 residues: Aspartate carbamoyltransferase catalytic subunit (316 aa).

The carbamoyl phosphate site is built by arginine 56 and threonine 57. Lysine 84 lines the L-aspartate pocket. Positions 106, 139, and 142 each coordinate carbamoyl phosphate. L-aspartate is bound by residues arginine 172 and arginine 226. Carbamoyl phosphate is bound by residues glycine 267 and proline 268.

Belongs to the aspartate/ornithine carbamoyltransferase superfamily. ATCase family. In terms of assembly, heterododecamer (2C3:3R2) of six catalytic PyrB chains organized as two trimers (C3), and six regulatory PyrI chains organized as three dimers (R2).

It catalyses the reaction carbamoyl phosphate + L-aspartate = N-carbamoyl-L-aspartate + phosphate + H(+). It participates in pyrimidine metabolism; UMP biosynthesis via de novo pathway; (S)-dihydroorotate from bicarbonate: step 2/3. Functionally, catalyzes the condensation of carbamoyl phosphate and aspartate to form carbamoyl aspartate and inorganic phosphate, the committed step in the de novo pyrimidine nucleotide biosynthesis pathway. The polypeptide is Aspartate carbamoyltransferase catalytic subunit (Mycobacterium sp. (strain MCS)).